Reading from the N-terminus, the 238-residue chain is Membrane protein 2 (238 aa).

It belongs to the varicellovirus ORF2 protein family. In terms of processing, phosphorylated by host.

The protein resides in the host membrane. The protein is Membrane protein 2 of Varicella-zoster virus (strain Dumas) (HHV-3).